Here is a 178-residue protein sequence, read N- to C-terminus: Bifunctional protein PyrR (178 aa).

The PRPP-binding motif lies at 99 to 111 (VILVDDVLFTGRT).

Belongs to the purine/pyrimidine phosphoribosyltransferase family. PyrR subfamily. Homodimer and homohexamer; in equilibrium.

It carries out the reaction UMP + diphosphate = 5-phospho-alpha-D-ribose 1-diphosphate + uracil. Functionally, regulates transcriptional attenuation of the pyrimidine nucleotide (pyr) operon by binding in a uridine-dependent manner to specific sites on pyr mRNA. This disrupts an antiterminator hairpin in the RNA and favors formation of a downstream transcription terminator, leading to a reduced expression of downstream genes. Also displays a weak uracil phosphoribosyltransferase activity which is not physiologically significant. The protein is Bifunctional protein PyrR of Ligilactobacillus salivarius (strain UCC118) (Lactobacillus salivarius).